Reading from the N-terminus, the 544-residue chain is Methyl-accepting chemotaxis protein McpP (544 aa).

3 helical membrane-spanning segments follow: residues 12–32 (RLWL…LLML), 50–70 (VVQT…AGTL), and 192–212 (DASL…MLIA). An HAMP domain is found at 213 to 267 (RSIARPLQEAVQAMGNIASGESDLTRRLDTHGSDEITHLGEHFNRFNGKLQGVVG). Positions 272 to 508 (AAHALAQSAG…EINRNVLDTA (237 aa)) constitute a Methyl-accepting transducer domain.

Belongs to the methyl-accepting chemotaxis (MCP) protein family.

It localises to the cell membrane. Its function is as follows. Chemotactic-signal transducers respond to changes in the concentration of attractants and repellents in the environment, transduce a signal from the outside to the inside of the cell, and facilitate sensory adaptation through the variation of the level of methylation. McpP is a chemoreceptor that responds specifically to some C2 and C3 carboxylic acids. Recognizes acetate, pyruvate, propionate, and L-lactate. This is Methyl-accepting chemotaxis protein McpP from Pseudomonas putida (strain ATCC 47054 / DSM 6125 / CFBP 8728 / NCIMB 11950 / KT2440).